The sequence spans 508 residues: GTPase Obg (508 aa).

Residues 2–159 form the Obg domain; sequence ARFVDRVVLH…HDVILELKSM (158 aa). Residues 160–341 enclose the OBG-type G domain; it reads ADIGLVGFPS…LKYAMLDLVQ (182 aa). GTP contacts are provided by residues 166 to 173, 191 to 195, 212 to 215, 292 to 295, and 322 to 324; these read GFPSAGKS, FTTLQ, DVPG, NKAD, and SAV. 2 residues coordinate Mg(2+): Ser-173 and Thr-193. The OCT domain maps to 364–444; sequence DARKKNKDFE…IGEVSFEWEP (81 aa).

Belongs to the TRAFAC class OBG-HflX-like GTPase superfamily. OBG GTPase family. As to quaternary structure, monomer. Requires Mg(2+) as cofactor.

The protein resides in the cytoplasm. An essential GTPase which binds GTP, GDP and possibly (p)ppGpp with moderate affinity, with high nucleotide exchange rates and a fairly low GTP hydrolysis rate. Plays a role in control of the cell cycle, stress response, ribosome biogenesis and in those bacteria that undergo differentiation, in morphogenesis control. This is GTPase Obg from Corynebacterium diphtheriae (strain ATCC 700971 / NCTC 13129 / Biotype gravis).